A 533-amino-acid polypeptide reads, in one-letter code: Probable ribonuclease ZC3H12D (533 aa).

One can recognise an RNase NYN domain in the interval 92–246 (LRPIVIDGSN…PLGRRGPTLS (155 aa)). The C3H1-type zinc finger occupies 251 to 282 (KKPRPPEPSWQHCPYGKKCTYGVKCRFYHPER). Residues 262–368 (HCPYGKKCTY…ASGVVSQSRG (107 aa)) are necessary for interaction with ZC3H12A. The disordered stretch occupies residues 302-335 (LGGGAEEPRTPSARSRPTTARLLPQEPGEHDLPP).

It belongs to the ZC3H12 family. Interacts with ZC3H12A. Mg(2+) serves as cofactor. In terms of tissue distribution, expressed at low levels in bone marrow derived macrophages.

Its subcellular location is the cytoplasm. The protein localises to the P-body. In terms of biological role, may regulate cell growth likely by suppressing RB1 phosphorylation. May function as RNase and regulate the levels of target RNA species (Potential). In association with ZC3H12A enhances the degradation of interleukin IL-6 mRNA level in activated macrophages. Serve as a tumor suppressor in certain leukemia cells. Overexpression inhibits the G1 to S phase progression through suppression of RB1 phosphorylation. In Mus musculus (Mouse), this protein is Probable ribonuclease ZC3H12D.